Consider the following 433-residue polypeptide: 5-methylthioadenosine/S-adenosylhomocysteine deaminase (433 aa).

The Zn(2+) site is built by His67 and His69. Residues Glu96, Arg148, and His187 each coordinate substrate. Residue His214 participates in Zn(2+) binding. Glu217 and Asp302 together coordinate substrate. Asp302 contributes to the Zn(2+) binding site.

Belongs to the metallo-dependent hydrolases superfamily. MTA/SAH deaminase family. The cofactor is Zn(2+).

The enzyme catalyses S-adenosyl-L-homocysteine + H2O + H(+) = S-inosyl-L-homocysteine + NH4(+). It catalyses the reaction S-methyl-5'-thioadenosine + H2O + H(+) = S-methyl-5'-thioinosine + NH4(+). Catalyzes the deamination of 5-methylthioadenosine and S-adenosyl-L-homocysteine into 5-methylthioinosine and S-inosyl-L-homocysteine, respectively. Is also able to deaminate adenosine. In Carboxydothermus hydrogenoformans (strain ATCC BAA-161 / DSM 6008 / Z-2901), this protein is 5-methylthioadenosine/S-adenosylhomocysteine deaminase.